A 225-amino-acid polypeptide reads, in one-letter code: Membrane protein (225 aa).

At 1-20 (MSNETNCTLDFEQSVQLFKE) the chain is on the virion surface side. N-linked (GlcNAc...) asparagine; by host glycans are attached at residues N3 and N6. Residues 21–41 (YNLFITAFLLFLTIILQYGYA) form a helical membrane-spanning segment. The Intravirion segment spans residues 42–51 (TRSKVIYTLK). Residues 52 to 72 (MIVLWCFWPLNIAVGVISCIY) form a helical membrane-spanning segment. Topologically, residues 73–77 (PPNTG) are virion surface. A helical transmembrane segment spans residues 78–98 (GLVAAIILTVFACLSFVGYWI). At 99 to 225 (QSIRLFKRCR…VATGGSSLYT (127 aa)) the chain is on the intravirion side.

This sequence belongs to the gammacoronaviruses M protein family. Homomultimer. Interacts with envelope E protein in the budding compartment of the host cell, which is located between endoplasmic reticulum and the Golgi complex. Forms a complex with HE and S proteins. Interacts with nucleocapsid N protein. This interaction probably participates in RNA packaging into the virus.

It is found in the virion membrane. Its subcellular location is the host Golgi apparatus membrane. In terms of biological role, component of the viral envelope that plays a central role in virus morphogenesis and assembly via its interactions with other viral proteins. The chain is Membrane protein from Gallus gallus (Chicken).